The primary structure comprises 690 residues: Methionine--tRNA ligase 1 (690 aa).

Residues 11–21 carry the 'HIGH' region motif; the sequence is PYANGHIHIGH. Residues cysteine 142, cysteine 145, cysteine 155, and cysteine 158 each contribute to the Zn(2+) site. The 'KMSKS' region signature appears at 328 to 332; the sequence is KMSKS. An ATP-binding site is contributed by lysine 331. In terms of domain architecture, tRNA-binding spans 590–690; sequence DFSKVDLRVA…SGAKPGMRVH (101 aa).

This sequence belongs to the class-I aminoacyl-tRNA synthetase family. MetG type 1 subfamily. As to quaternary structure, homodimer. Zn(2+) is required as a cofactor.

The protein resides in the cytoplasm. The enzyme catalyses tRNA(Met) + L-methionine + ATP = L-methionyl-tRNA(Met) + AMP + diphosphate. Functionally, is required not only for elongation of protein synthesis but also for the initiation of all mRNA translation through initiator tRNA(fMet) aminoacylation. The chain is Methionine--tRNA ligase 1 from Sorangium cellulosum (strain So ce56) (Polyangium cellulosum (strain So ce56)).